The following is a 254-amino-acid chain: Glucosamine-6-phosphate deaminase (254 aa).

Aspartate 63 (proton acceptor; for enolization step) is an active-site residue. Asparagine 129 serves as the catalytic For ring-opening step. Histidine 131 functions as the Proton acceptor; for ring-opening step in the catalytic mechanism. Residue glutamate 136 is the For ring-opening step of the active site.

The protein belongs to the glucosamine/galactosamine-6-phosphate isomerase family. NagB subfamily.

It catalyses the reaction alpha-D-glucosamine 6-phosphate + H2O = beta-D-fructose 6-phosphate + NH4(+). The protein operates within amino-sugar metabolism; N-acetylneuraminate degradation; D-fructose 6-phosphate from N-acetylneuraminate: step 5/5. Its function is as follows. Catalyzes the reversible isomerization-deamination of glucosamine 6-phosphate (GlcN6P) to form fructose 6-phosphate (Fru6P) and ammonium ion. The polypeptide is Glucosamine-6-phosphate deaminase (Exiguobacterium sp. (strain ATCC BAA-1283 / AT1b)).